Here is an 894-residue protein sequence, read N- to C-terminus: Septin and tuftelin-interacting protein 1 homolog (894 aa).

Disordered regions lie at residues Y71–V149 and N187–G225. A compositionally biased stretch (basic and acidic residues) spans P73–E84. Basic residues predominate over residues K97 to K126. One can recognise a G-patch domain in the interval V149 to E195. Residues D202–D217 are compositionally biased toward acidic residues. Residues K329 to E449 adopt a coiled-coil conformation. Positions N785–I821 are disordered.

Belongs to the TFP11/STIP family. In terms of assembly, identified in the spliceosome C complex.

Its subcellular location is the cytoplasm. The protein resides in the nucleus. In terms of biological role, may be involved in pre-mRNA splicing. The polypeptide is Septin and tuftelin-interacting protein 1 homolog (stip-1) (Dictyostelium discoideum (Social amoeba)).